We begin with the raw amino-acid sequence, 1034 residues long: Teashirt homolog 2 (1034 aa).

A disordered region spans residues 1–90 (MPRRKQQAPK…NESLLSDASD (90 aa)). Residues 13 to 38 (AGYAQEEQLKEEEEIKEEEEEEDSGS) adopt a coiled-coil conformation. Over residues 21–36 (LKEEEEIKEEEEEEDS) the composition is skewed to acidic residues. A compositionally biased stretch (polar residues) spans 65-90 (SYQNSPGSHLSNQDAENESLLSDASD). A Glycyl lysine isopeptide (Lys-Gly) (interchain with G-Cter in SUMO2) cross-link involves residue Lys188. 2 C2H2-type zinc fingers span residues 215–239 (FRCRQCSAAYDTLVELTVHMNETGH) and 275–299 (LKCMFCGDSFDSLQDLSVHMIKTKH). Residues 239 to 265 (HYQDDNRKKDKLRPTSYSKPRKRAFQD) form a disordered region. Residues Lys306 and Lys315 each participate in a glycyl lysine isopeptide (Lys-Gly) (interchain with G-Cter in SUMO2) cross-link. The C2H2-type 3; atypical zinc finger occupies 380–404 (LKCMECGSSHDTLQQLTTHMMVTGH). Lys417 is covalently cross-linked (Glycyl lysine isopeptide (Lys-Gly) (interchain with G-Cter in SUMO2)). The segment covering 432–455 (LSEAPNSDSLAPKPSSNSASDCTA) has biased composition (polar residues). Positions 432–496 (LSEAPNSDSL…PLQKPLDPTI (65 aa)) are disordered. Residues 459–482 (ELKKESKKERPEETSKDEKVVKSE) are compositionally biased toward basic and acidic residues. Glycyl lysine isopeptide (Lys-Gly) (interchain with G-Cter in SUMO2) cross-links involve residues Lys461, Lys480, Lys497, Lys601, and Lys652. 2 disordered regions span residues 598–676 (TQVK…TSAL) and 763–789 (QPIDLTKSKSKKAESSQAQSCMSPPQK). The segment covering 600-668 (VKKESEDKDE…KEGSEKEKPQ (69 aa)) has biased composition (basic and acidic residues). Glycyl lysine isopeptide (Lys-Gly) (interchain with G-Cter in SUMO2) cross-links involve residues Lys800 and Lys820. Positions 841–911 (RKGRQSNWNP…NVKYQLRKTG (71 aa)) form a DNA-binding region, homeobox; atypical. Residues 926-948 (FYCSDCASQFRTPSTYISHLESH) form a C2H2-type 4 zinc finger. A Glycyl lysine isopeptide (Lys-Gly) (interchain with G-Cter in SUMO2) cross-link involves residue Lys966. Ser980 bears the Phosphoserine mark. Residues 994–1017 (FKCKLCCRTFVSKHAVKLHLSKTH) form a C2H2-type 5 zinc finger. The segment at 1014 to 1034 (SKTHSKSPEHHSQFVTDVDEE) is disordered.

Belongs to the teashirt C2H2-type zinc-finger protein family. As to quaternary structure, interacts (via homeobox domain) with APBB1 (via PID domain 1). Sumoylated. In terms of tissue distribution, expressed in brain; strongly reduced in post-mortem elderly subjects with Alzheimer disease.

It is found in the nucleus. Its function is as follows. Probable transcriptional regulator involved in developmental processes. May act as a transcriptional repressor (Potential). This Homo sapiens (Human) protein is Teashirt homolog 2 (TSHZ2).